A 317-amino-acid polypeptide reads, in one-letter code: Ferrochelatase (317 aa).

Histidine 192 and glutamate 271 together coordinate Fe cation.

This sequence belongs to the ferrochelatase family.

It is found in the cytoplasm. It catalyses the reaction heme b + 2 H(+) = protoporphyrin IX + Fe(2+). Its pathway is porphyrin-containing compound metabolism; protoheme biosynthesis; protoheme from protoporphyrin-IX: step 1/1. Catalyzes the ferrous insertion into protoporphyrin IX. In Geobacter metallireducens (strain ATCC 53774 / DSM 7210 / GS-15), this protein is Ferrochelatase.